The sequence spans 863 residues: Bifunctional uridylyltransferase/uridylyl-removing enzyme (863 aa).

The segment at 1–328 (MLFSPTLSSL…SSNQDTVIDQ (328 aa)) is uridylyltransferase. A uridylyl-removing region spans residues 329-687 (LDDDFQLINQ…ISNRFSLGGT (359 aa)). The HD domain occupies 446–568 (VDEHTLRVML…MQNQVRLDYL (123 aa)). ACT domains lie at 688 to 764 (EVFI…KLPA) and 794 to 863 (EMEL…QQIR).

It belongs to the GlnD family. It depends on Mg(2+) as a cofactor.

The enzyme catalyses [protein-PII]-L-tyrosine + UTP = [protein-PII]-uridylyl-L-tyrosine + diphosphate. It carries out the reaction [protein-PII]-uridylyl-L-tyrosine + H2O = [protein-PII]-L-tyrosine + UMP + H(+). Its activity is regulated as follows. Uridylyltransferase (UTase) activity is inhibited by glutamine, while glutamine activates uridylyl-removing (UR) activity. In terms of biological role, modifies, by uridylylation and deuridylylation, the PII regulatory proteins (GlnB and homologs), in response to the nitrogen status of the cell that GlnD senses through the glutamine level. Under low glutamine levels, catalyzes the conversion of the PII proteins and UTP to PII-UMP and PPi, while under higher glutamine levels, GlnD hydrolyzes PII-UMP to PII and UMP (deuridylylation). Thus, controls uridylylation state and activity of the PII proteins, and plays an important role in the regulation of nitrogen assimilation and metabolism. This Haemophilus influenzae (strain ATCC 51907 / DSM 11121 / KW20 / Rd) protein is Bifunctional uridylyltransferase/uridylyl-removing enzyme.